Here is a 202-residue protein sequence, read N- to C-terminus: Small ribosomal subunit protein uS5 (202 aa).

Residues 1–13 show a composition bias toward gly residues; that stretch reads MPGQQRRGGGSGG. The segment at 1–31 is disordered; the sequence is MPGQQRRGGGSGGSDRRERRDRSGSGPAQEK. Residues 14-23 are compositionally biased toward basic and acidic residues; it reads SDRRERRDRS. The S5 DRBM domain occupies 34–97; that stretch reads YVERVVAINR…EEAKKHFFKV (64 aa).

It belongs to the universal ribosomal protein uS5 family. Part of the 30S ribosomal subunit. Contacts proteins S4 and S8.

In terms of biological role, with S4 and S12 plays an important role in translational accuracy. Functionally, located at the back of the 30S subunit body where it stabilizes the conformation of the head with respect to the body. In Frankia casuarinae (strain DSM 45818 / CECT 9043 / HFP020203 / CcI3), this protein is Small ribosomal subunit protein uS5.